Reading from the N-terminus, the 208-residue chain is Holliday junction branch migration complex subunit RuvA (208 aa).

Residues 1–64 (MIGRLHGTVA…DDGQALYGFA (64 aa)) form a domain I region. The tract at residues 65–143 (SRAERDLFRV…GLLPAASGGV (79 aa)) is domain II. Residues 139–162 (ASGGVPARTGSGEQLDAPAGPQGS) form a disordered region. Residues 144-157 (PARTGSGEQLDAPA) are flexible linker. The segment at 158-208 (GPQGSREDAVSALVALGYKPAEAGRLVNAVPGANDLPSEELIRRALQAAVR) is domain III.

The protein belongs to the RuvA family. Homotetramer. Forms an RuvA(8)-RuvB(12)-Holliday junction (HJ) complex. HJ DNA is sandwiched between 2 RuvA tetramers; dsDNA enters through RuvA and exits via RuvB. An RuvB hexamer assembles on each DNA strand where it exits the tetramer. Each RuvB hexamer is contacted by two RuvA subunits (via domain III) on 2 adjacent RuvB subunits; this complex drives branch migration. In the full resolvosome a probable DNA-RuvA(4)-RuvB(12)-RuvC(2) complex forms which resolves the HJ.

Its subcellular location is the cytoplasm. Its function is as follows. The RuvA-RuvB-RuvC complex processes Holliday junction (HJ) DNA during genetic recombination and DNA repair, while the RuvA-RuvB complex plays an important role in the rescue of blocked DNA replication forks via replication fork reversal (RFR). RuvA specifically binds to HJ cruciform DNA, conferring on it an open structure. The RuvB hexamer acts as an ATP-dependent pump, pulling dsDNA into and through the RuvAB complex. HJ branch migration allows RuvC to scan DNA until it finds its consensus sequence, where it cleaves and resolves the cruciform DNA. This chain is Holliday junction branch migration complex subunit RuvA, found in Alkalilimnicola ehrlichii (strain ATCC BAA-1101 / DSM 17681 / MLHE-1).